A 429-amino-acid polypeptide reads, in one-letter code: Glutamate-1-semialdehyde 2,1-aminomutase (429 aa).

An N6-(pyridoxal phosphate)lysine modification is found at lysine 264.

It belongs to the class-III pyridoxal-phosphate-dependent aminotransferase family. HemL subfamily. In terms of assembly, homodimer. Requires pyridoxal 5'-phosphate as cofactor.

The protein resides in the cytoplasm. It catalyses the reaction (S)-4-amino-5-oxopentanoate = 5-aminolevulinate. Its pathway is porphyrin-containing compound metabolism; protoporphyrin-IX biosynthesis; 5-aminolevulinate from L-glutamyl-tRNA(Glu): step 2/2. This chain is Glutamate-1-semialdehyde 2,1-aminomutase, found in Campylobacter curvus (strain 525.92).